The following is a 142-amino-acid chain: Arginine vasopressin-induced protein 1 (142 aa).

Disordered regions lie at residues 1 to 28 (MGTP…KQAS) and 74 to 142 (RLRR…QIRH). A compositionally biased stretch (polar residues) spans 15-28 (QVSTPQTRGRKQAS). Positions 74-88 (RLRRKRPPKQNHCSR) are enriched in basic residues. Positions 96–119 (STASDPQASTTDTASSEQSGNSRR) are enriched in polar residues.

May be involved in MAP kinase activation, epithelial sodium channel (ENaC) down-regulation and cell cycling. In Mus musculus (Mouse), this protein is Arginine vasopressin-induced protein 1 (Avpi1).